The sequence spans 172 residues: Urease accessory protein UreE (172 aa).

Belongs to the UreE family.

It is found in the cytoplasm. In terms of biological role, involved in urease metallocenter assembly. Binds nickel. Probably functions as a nickel donor during metallocenter assembly. This chain is Urease accessory protein UreE, found in Shewanella halifaxensis (strain HAW-EB4).